We begin with the raw amino-acid sequence, 611 residues long: MPKLRSATSTQGRNMAGARALWRATGMKENDFGKPIIAVVNSFTQFVPGHVHLKDMGQLVAAEIEKFGGVAKEFNTIAVDDGIAMGHGGMLYSLPSRDLIADSVEYMVNAHCADAMVCISNCDKITPGMLMAALRLNIPTVFVSGGPMEAGKTKLSDQIIKLDLVDAMIQGANPNVSDDVSEQIERSACPTCGSCSGMFTANSMNCLTEALGLSLPGNGSCLATHADRKQLFLAAGKQIVELCKRYYEQDDTSVLPRSIATKEAFDNAMSLDIAMGGSTNTVLHLLAAAQEAEVNFTMADIDRLSRVVPCLSKVAPNTQKYHMEDVHRAGGIMAILGELDRAGLLNSQTRTILGMSIGEQIAKYDIKLTQDKAIHKFFRAGPAGIRTTQAFSQDCRWDTVDDDRENGCIRSKEFAYSQDGGLAMLSGNIALDGCIVKTAGVDESILKFSGKAIVFESQEDAVSGILGGKVQAGHVVVIRYEGPKGGPGMQEMLYPTSYLKSMGLGKACALLTDGRFSGGTSGLSIGHCSPEAAAGGLIGVVKDGDIIEIDIPNRRIELMVSEEELAERRAEQDKLGWKPANRQREVSFALKVYGYFATSADKGAVRDKTKI.

D81 serves as a coordination point for Mg(2+). C122 provides a ligand contact to [2Fe-2S] cluster. Mg(2+) contacts are provided by D123 and K124. An N6-carboxylysine modification is found at K124. [2Fe-2S] cluster is bound at residue C195. E491 lines the Mg(2+) pocket. S517 acts as the Proton acceptor in catalysis.

Belongs to the IlvD/Edd family. In terms of assembly, homodimer. It depends on [2Fe-2S] cluster as a cofactor. Mg(2+) serves as cofactor.

It carries out the reaction (2R)-2,3-dihydroxy-3-methylbutanoate = 3-methyl-2-oxobutanoate + H2O. It catalyses the reaction (2R,3R)-2,3-dihydroxy-3-methylpentanoate = (S)-3-methyl-2-oxopentanoate + H2O. It functions in the pathway amino-acid biosynthesis; L-isoleucine biosynthesis; L-isoleucine from 2-oxobutanoate: step 3/4. The protein operates within amino-acid biosynthesis; L-valine biosynthesis; L-valine from pyruvate: step 3/4. Functionally, functions in the biosynthesis of branched-chain amino acids. Catalyzes the dehydration of (2R,3R)-2,3-dihydroxy-3-methylpentanoate (2,3-dihydroxy-3-methylvalerate) into 2-oxo-3-methylpentanoate (2-oxo-3-methylvalerate) and of (2R)-2,3-dihydroxy-3-methylbutanoate (2,3-dihydroxyisovalerate) into 2-oxo-3-methylbutanoate (2-oxoisovalerate), the penultimate precursor to L-isoleucine and L-valine, respectively. This Histophilus somni (strain 2336) (Haemophilus somnus) protein is Dihydroxy-acid dehydratase.